We begin with the raw amino-acid sequence, 91 residues long: AIDCKTVDAALVPCVPYLTGGGTPTTQCCSGVSSIKTMAGTPQDKKDACNCVKAAANRYPNIRDDVAQALPVKCNVQLDIPVSRTTNCDAI.

Cystine bridges form between cysteine 4/cysteine 51, cysteine 14/cysteine 28, cysteine 29/cysteine 74, and cysteine 49/cysteine 88.

As to expression, expressed in seeds (at protein level).

Functionally, plant non-specific lipid-transfer proteins transfer phospholipids as well as galactolipids across membranes. May play a role in wax or cutin deposition in the cell walls of expanding epidermal cells and certain secretory tissues. Binds to both saturated and unsaturated lipids, with the highest binding efficiency for linoleic acid, followed by linolenic acid. In Foeniculum vulgare (Fennel), this protein is Non-specific lipid-transfer protein 1.